A 265-amino-acid polypeptide reads, in one-letter code: MNKDVSLGQPIVRYEDGKLFNTTDQYVTEFPLTIMVNGEEFATVICSPTNLEELVIGFLASEGAILKRDELKSVLIDDSKGFAHVELNKDLGDRFQYSTKRMIASCCGKSREFYFQNDAAIAKTSMSKITLTPIQIINMMTRLQSASHIYQETGGLHNAAISDGLTFFVHRQDIGRHNALDKLYGFCIQRHITVRDKVLIFSGRISSEILIKAAKIGVGVILSKSAPTTLAVTLANDLNITAVGFIRNGGFNIYSHPERIIDSEQ.

The Cysteine persulfide intermediate role is filled by Cys107.

Belongs to the FdhD family.

The protein resides in the cytoplasm. In terms of biological role, required for formate dehydrogenase (FDH) activity. Acts as a sulfur carrier protein that transfers sulfur from IscS to the molybdenum cofactor prior to its insertion into FDH. The chain is Sulfur carrier protein FdhD from Staphylococcus aureus (strain JH9).